The primary structure comprises 351 residues: S-adenosylmethionine:tRNA ribosyltransferase-isomerase (351 aa).

This sequence belongs to the QueA family. Monomer.

It is found in the cytoplasm. It carries out the reaction 7-aminomethyl-7-carbaguanosine(34) in tRNA + S-adenosyl-L-methionine = epoxyqueuosine(34) in tRNA + adenine + L-methionine + 2 H(+). Its pathway is tRNA modification; tRNA-queuosine biosynthesis. Its function is as follows. Transfers and isomerizes the ribose moiety from AdoMet to the 7-aminomethyl group of 7-deazaguanine (preQ1-tRNA) to give epoxyqueuosine (oQ-tRNA). In Hahella chejuensis (strain KCTC 2396), this protein is S-adenosylmethionine:tRNA ribosyltransferase-isomerase.